We begin with the raw amino-acid sequence, 461 residues long: Juvenile hormone epoxide hydrolase (461 aa).

A helical transmembrane segment spans residues 4–24 (LLFIALPLLVLASIPLYLLVL). D227 functions as the Nucleophile in the catalytic mechanism. Catalysis depends on Y373, which acts as the Proton donor. The active-site Proton acceptor is H430.

It belongs to the peptidase S33 family. Homodimer. As to expression, expressed in fat body, foregut and midgut but not in brain, subesophageal ganglia or silk gland of larvae on day 1 of fifth instar.

It is found in the microsome membrane. The protein localises to the endoplasmic reticulum membrane. The enzyme catalyses cis-stilbene oxide + H2O = (1R,2R)-hydrobenzoin. It carries out the reaction 1-(4-methoxyphenyl)-N-methyl-N-[(3-methyloxetan-3-yl)methyl]methanamine + H2O = 2-{[(4-methoxybenzyl)(methyl)amino]methyl}-2-methylpropane-1,3-diol. Functionally, catalyzes juvenile hormone hydrolysis. Degrades juvenile hormone III (JH III) about 3 times and 5 times slower than juvenile hormone I (JH I) and II (JH II), respectively. Degrades cis-stilbene oxide and trans-stilbene oxide about 18 and 43 times slower than JH III, respectively. The sequence is that of Juvenile hormone epoxide hydrolase from Bombyx mori (Silk moth).